The primary structure comprises 427 residues: Glutamate-1-semialdehyde 2,1-aminomutase (427 aa).

Lys-267 carries the post-translational modification N6-(pyridoxal phosphate)lysine.

The protein belongs to the class-III pyridoxal-phosphate-dependent aminotransferase family. HemL subfamily. In terms of assembly, homodimer. The cofactor is pyridoxal 5'-phosphate.

It localises to the cytoplasm. It carries out the reaction (S)-4-amino-5-oxopentanoate = 5-aminolevulinate. Its pathway is porphyrin-containing compound metabolism; protoporphyrin-IX biosynthesis; 5-aminolevulinate from L-glutamyl-tRNA(Glu): step 2/2. The chain is Glutamate-1-semialdehyde 2,1-aminomutase from Acetivibrio thermocellus (strain ATCC 27405 / DSM 1237 / JCM 9322 / NBRC 103400 / NCIMB 10682 / NRRL B-4536 / VPI 7372) (Clostridium thermocellum).